The following is a 158-amino-acid chain: NAD(P)H-quinone oxidoreductase subunit N (158 aa).

This sequence belongs to the complex I NdhN subunit family. NDH-1 can be composed of about 15 different subunits; different subcomplexes with different compositions have been identified which probably have different functions.

Its subcellular location is the cellular thylakoid membrane. The catalysed reaction is a plastoquinone + NADH + (n+1) H(+)(in) = a plastoquinol + NAD(+) + n H(+)(out). It catalyses the reaction a plastoquinone + NADPH + (n+1) H(+)(in) = a plastoquinol + NADP(+) + n H(+)(out). Its function is as follows. NDH-1 shuttles electrons from an unknown electron donor, via FMN and iron-sulfur (Fe-S) centers, to quinones in the respiratory and/or the photosynthetic chain. The immediate electron acceptor for the enzyme in this species is believed to be plastoquinone. Couples the redox reaction to proton translocation, and thus conserves the redox energy in a proton gradient. Cyanobacterial NDH-1 also plays a role in inorganic carbon-concentration. This chain is NAD(P)H-quinone oxidoreductase subunit N, found in Synechococcus elongatus (strain ATCC 33912 / PCC 7942 / FACHB-805) (Anacystis nidulans R2).